The primary structure comprises 434 residues: Enolase (434 aa).

Positions 158 and 167 each coordinate substrate. The active-site Proton donor is E210. D245, E294, and D319 together coordinate Mg(2+). Positions 294 and 319 each coordinate substrate. K344 serves as the catalytic Proton acceptor. Substrate-binding positions include 371 to 374 (SHRS) and K395.

Belongs to the enolase family. Homodimer. Requires Mg(2+) as cofactor.

Its subcellular location is the cytoplasm. The catalysed reaction is (2R)-2-phosphoglycerate = phosphoenolpyruvate + H2O. It participates in carbohydrate degradation; glycolysis; pyruvate from D-glyceraldehyde 3-phosphate: step 4/5. This is Enolase from Doryteuthis pealeii (Longfin inshore squid).